The sequence spans 206 residues: Large ribosomal subunit protein uL4 (206 aa).

This sequence belongs to the universal ribosomal protein uL4 family. In terms of assembly, part of the 50S ribosomal subunit.

One of the primary rRNA binding proteins, this protein initially binds near the 5'-end of the 23S rRNA. It is important during the early stages of 50S assembly. It makes multiple contacts with different domains of the 23S rRNA in the assembled 50S subunit and ribosome. Functionally, forms part of the polypeptide exit tunnel. The protein is Large ribosomal subunit protein uL4 of Rhodopseudomonas palustris (strain BisB18).